The following is a 159-amino-acid chain: Large ribosomal subunit protein uL11 (159 aa).

Residues 1 to 26 (MAGTIEVLVPGGKANPGPPLGPELGP) form a disordered region.

The protein belongs to the universal ribosomal protein uL11 family. As to quaternary structure, part of the ribosomal stalk of the 50S ribosomal subunit. Interacts with L10 and the large rRNA to form the base of the stalk. L10 forms an elongated spine to which L12 dimers bind in a sequential fashion forming a multimeric L10(L12)X complex.

In terms of biological role, forms part of the ribosomal stalk which helps the ribosome interact with GTP-bound translation factors. This chain is Large ribosomal subunit protein uL11, found in Haloferax volcanii (strain ATCC 29605 / DSM 3757 / JCM 8879 / NBRC 14742 / NCIMB 2012 / VKM B-1768 / DS2) (Halobacterium volcanii).